The primary structure comprises 647 residues: Putative lipase atg15 (647 aa).

The Cytoplasmic segment spans residues 1-18; sequence MLPSGKRKADAFSCTSAA. A helical; Signal-anchor for type II membrane protein transmembrane segment spans residues 19 to 39; it reads RVTAKLALSFLALSTTPLVNA. Residues 40 to 647 are Lumenal-facing; that stretch reads FSYEEPNAQI…EGGEGPVNDL (608 aa). N-linked (GlcNAc...) asparagine glycosylation is found at Asn-203, Asn-225, Asn-283, and Asn-307. Residue Ser-323 is the Charge relay system of the active site. A glycan (N-linked (GlcNAc...) asparagine) is linked at Asn-469. Residues 597-626 are disordered; the sequence is APALPSSVLTPSATATPPEGQPDDSGKRCR.

It belongs to the AB hydrolase superfamily. Lipase family. As to quaternary structure, binds to both phosphatidylinositol (PI) and phosphatidylinositol 3,5-bisphosphate (PIP2).

Its subcellular location is the endosome. The protein resides in the multivesicular body membrane. The protein localises to the prevacuolar compartment membrane. It carries out the reaction a triacylglycerol + H2O = a diacylglycerol + a fatty acid + H(+). Lipase which is essential for lysis of subvacuolar cytoplasm to vacuole targeted bodies and intravacuolar autophagic bodies. Involved in the lysis of intravacuolar multivesicular body (MVB) vesicles. The intravacuolar membrane disintegration by atg15 is critical to life span extension. In Neurospora crassa (strain ATCC 24698 / 74-OR23-1A / CBS 708.71 / DSM 1257 / FGSC 987), this protein is Putative lipase atg15 (atg15).